A 234-amino-acid polypeptide reads, in one-letter code: Large ribosomal subunit protein uL1 (234 aa).

This sequence belongs to the universal ribosomal protein uL1 family. As to quaternary structure, part of the 50S ribosomal subunit.

Functionally, binds directly to 23S rRNA. The L1 stalk is quite mobile in the ribosome, and is involved in E site tRNA release. Protein L1 is also a translational repressor protein, it controls the translation of the L11 operon by binding to its mRNA. The sequence is that of Large ribosomal subunit protein uL1 from Salmonella arizonae (strain ATCC BAA-731 / CDC346-86 / RSK2980).